A 361-amino-acid polypeptide reads, in one-letter code: Neuronal-specific septin-3 (361 aa).

The tract at residues 1–46 is disordered; that stretch reads MSEIVPPEVRPKPAVPAKPSHVAPPSSAPFVPSPQGTGGEGQGSGR. A compositionally biased stretch (low complexity) spans 15-34; the sequence is VPAKPSHVAPPSSAPFVPSP. Residues 36–46 show a composition bias toward gly residues; that stretch reads GTGGEGQGSGR. Residues 70-342 enclose the Septin-type G domain; that stretch reads AGFDFNIMVV…ETYRAKRLND (273 aa). A G1 motif region spans residues 80–87; sequence GQSGLGKS. GTP-binding positions include 80–87 and T114; that span reads GQSGLGKS. A G3 motif region spans residues 137–140; sequence DTPG. Residues 219–222 are G4 motif; the sequence is AKSD. Residues 220-228, G276, and R291 contribute to the GTP site; that span reads KSDTLTPEE. The interval 341–361 is disordered; the sequence is NDNGGLHPISSSGHDTQESNL. The span at 349–361 shows a compositional bias: polar residues; that stretch reads ISSSGHDTQESNL.

Belongs to the TRAFAC class TrmE-Era-EngA-EngB-Septin-like GTPase superfamily. Septin GTPase family.

The protein resides in the cytoplasm. In terms of biological role, may be involved in cytokinesis. This Danio rerio (Zebrafish) protein is Neuronal-specific septin-3.